Here is a 519-residue protein sequence, read N- to C-terminus: Sorting nexin-2 (519 aa).

Positions 1–104 are disordered; it reads MAAEREPPPL…EPSPAVTPVT (104 aa). 2 stretches are compositionally biased toward low complexity: residues 27–50 and 93–104; these read LFTS…LPAE and SSEPSPAVTPVT. Ser-97 bears the Phosphoserine mark. A phosphothreonine mark is found at Thr-101 and Thr-104. 2 positions are modified to phosphoserine: Ser-117 and Ser-119. The PX domain occupies 140–269; it reads FDIEIGVSDP…QFLESSELPR (130 aa). A 1,2-diacyl-sn-glycero-3-phospho-(1D-myo-inositol-3-phosphate) is bound by residues Arg-183, Ser-185, Lys-211, and Arg-235. Ser-185 is subject to Phosphoserine. The segment at 260–519 is interaction with RhoG; it reads QFLESSELPR…AFLPEAKAIA (260 aa). At Ser-277 the chain carries Phosphoserine. The interval 278 to 295 is membrane-binding amphipathic helix; that stretch reads GAGILRMVNKAADAVNKM. The 221-residue stretch at 299–519 folds into the BAR domain; sequence MNESDAWFEE…AFLPEAKAIA (221 aa). Position 469 is an N6-acetyllysine (Lys-469).

It belongs to the sorting nexin family. In terms of assembly, predominantly forms heterodimers with BAR domain-containing sorting nexins SNX5, SNX6 and SNX32; can self-associate to form homodimers. The heterodimers are proposed to self-assemble into helical arrays on the membrane to stabilize and expand local membrane curvature underlying endosomal tubule formation. Thought to be a component of the originally described retromer complex (also called SNX-BAR retromer) which is a pentamer containing the heterotrimeric retromer cargo-selective complex (CSC), also described as vacuolar protein sorting subcomplex (VPS), and a heterodimeric membrane-deforming subcomplex formed between SNX1 or SNX2 and SNX5 or SNX6 (also called SNX-BAR subcomplex); the respective CSC and SNX-BAR subcomplexes associate with low affinity. Interacts with SNX5, SNX6, SNX32, VPS26A, VPS29, VPS35, FNBP1, KALRN, RHOG (GDP-bound form).

It is found in the early endosome membrane. It localises to the cell projection. Its subcellular location is the lamellipodium. Involved in several stages of intracellular trafficking. Interacts with membranes containing phosphatidylinositol 3-phosphate (PtdIns(3P)) or phosphatidylinositol 3,5-bisphosphate (PtdIns(3,5)P2). Acts in part as component of the retromer membrane-deforming SNX-BAR subcomplex. The SNX-BAR retromer mediates retrograde transport of cargo proteins from endosomes to the trans-Golgi network (TGN) and is involved in endosome-to-plasma membrane transport for cargo protein recycling. The SNX-BAR subcomplex functions to deform the donor membrane into a tubular profile called endosome-to-TGN transport carrier (ETC). Can sense membrane curvature and has in vitro vesicle-to-membrane remodeling activity. Required for retrograde endosome-to-TGN transport of TGN38. Promotes KALRN- and RHOG-dependent but retromer-independent membrane remodeling such as lamellipodium formation; the function is dependent on GEF activity of KALRN. This chain is Sorting nexin-2 (SNX2), found in Homo sapiens (Human).